The primary structure comprises 579 residues: Folliculin (579 aa).

The tract at residues 32-52 is disordered; sequence GASCGDSIGQGEQAEDEEMGI. A uDENN FLCN/SMCR8-type domain is found at 86 to 242; sequence RSLAAGHPGY…RNGNAARSLT (157 aa). Positions 337-491 constitute a cDENN FLCN/SMCR8-type domain; the sequence is NMVQRRMGVF…ILNKIEAALS (155 aa). The region spanning 493-558 is the dDENN FLCN/SMCR8-type domain; that stretch reads ENLSMDVVDQ…LLKFWMTGLS (66 aa).

This sequence belongs to the folliculin family. As to quaternary structure, component of the lysosomal folliculin complex (LFC).

Its subcellular location is the lysosome membrane. It localises to the cytoplasm. The protein resides in the cytosol. The protein localises to the cell projection. It is found in the cilium. Its subcellular location is the cytoskeleton. It localises to the microtubule organizing center. The protein resides in the centrosome. The protein localises to the spindle. It is found in the nucleus. GTPase-activating activity is inhibited in the folliculin complex (LFC), which stabilizes the GDP-bound state of RagA/RRAGA (or RagB/RRAGB), because Arg-164 is located far from the RagC/RRAGC or RagD/RRAGD nucleotide pocket. Disassembly of the LFC complex upon amino acid restimulation liberates the GTPase-activating activity. Functionally, multi-functional protein, involved in both the cellular response to amino acid availability and in the regulation of glycolysis. GTPase-activating protein that plays a key role in the cellular response to amino acid availability through regulation of the non-canonical mTORC1 signaling cascade controlling the MiT/TFE factors tfeb and tfe3. Activates mTORC1 by acting as a GTPase-activating protein: specifically stimulates GTP hydrolysis by RagC/RRAGC or RagD/RRAGD, promoting the conversion to the GDP-bound state of RagC/RRAGC or RagD/RRAGD, and thereby activating the kinase activity of mTORC1. The GTPase-activating activity is inhibited during starvation and activated in presence of nutrients. Acts as a key component for non-canonical mTORC1-dependent control of the MiT/TFE factors tfeb and tfe3, while it is not involved in mTORC1-dependent phosphorylation of canonical RPS6KB1/S6K1 and EIF4EBP1/4E-BP1. In low-amino acid conditions, the lysosomal folliculin complex (LFC) is formed on the membrane of lysosomes, which inhibits the GTPase-activating activity of flcn, inactivates mTORC1 and maximizes nuclear translocation of tfeb and tfe3. Upon amino acid restimulation, RagA/RRAGA (or RagB/RRAGB) nucleotide exchange promotes disassembly of the LFC complex and liberates the GTPase-activating activity of flcn, leading to activation of mTORC1 and subsequent cytoplasmic retention of tfeb and tfe3. Required for the exit of hematopoietic stem cell from pluripotency by promoting mTOR-dependent cytoplasmic retention of tfe3, thereby increasing Wnt signaling. Acts as an inhibitor of browning of adipose tissue by regulating mTOR-dependent cytoplasmic retention of tfe3. In response to flow stress, regulates STK11/LKB1 accumulation and mTORC1 activation through primary cilia. Required for starvation-induced perinuclear clustering of lysosomes by promoting association of rilp with its effector rab34. Involved in the control of embryonic stem cells differentiation; together with lamtor1 it is necessary to recruit and activate RagC/RRAGC and RagD/RRAGD at the lysosomes, and to induce exit of embryonic stem cells from pluripotency via non-canonical, mTOR-independent tfe3 inactivation. Regulates glycolysis by binding to lactate dehydrogenase ldha, acting as an uncompetitive inhibitor. This is Folliculin from Xenopus tropicalis (Western clawed frog).